Here is a 473-residue protein sequence, read N- to C-terminus: Ribulose bisphosphate carboxylase large chain (473 aa).

Substrate is bound by residues Asn116 and Thr166. Residue Lys168 is the Proton acceptor of the active site. Lys170 provides a ligand contact to substrate. Positions 194, 196, and 197 each coordinate Mg(2+). Lys194 is subject to N6-carboxylysine. The Proton acceptor role is filled by His287. Residues Arg288, His320, and Ser372 each coordinate substrate.

The protein belongs to the RuBisCO large chain family. Type I subfamily. In terms of assembly, heterohexadecamer of 8 large chains and 8 small chains. It depends on Mg(2+) as a cofactor.

It carries out the reaction 2 (2R)-3-phosphoglycerate + 2 H(+) = D-ribulose 1,5-bisphosphate + CO2 + H2O. It catalyses the reaction D-ribulose 1,5-bisphosphate + O2 = 2-phosphoglycolate + (2R)-3-phosphoglycerate + 2 H(+). RuBisCO catalyzes two reactions: the carboxylation of D-ribulose 1,5-bisphosphate, the primary event in carbon dioxide fixation, as well as the oxidative fragmentation of the pentose substrate. Both reactions occur simultaneously and in competition at the same active site. The protein is Ribulose bisphosphate carboxylase large chain of Nitrosomonas eutropha (strain DSM 101675 / C91 / Nm57).